The following is a 296-amino-acid chain: Arginase (296 aa).

4 residues coordinate Mn(2+): H97, D120, H122, and D124. Residues H122–N126, S133–N135, and D176 each bind substrate. Mn(2+) contacts are provided by D223 and D225. Residues T237 and E268 each coordinate substrate.

This sequence belongs to the arginase family. It depends on Mn(2+) as a cofactor.

It catalyses the reaction L-arginine + H2O = urea + L-ornithine. Its pathway is nitrogen metabolism; urea cycle; L-ornithine and urea from L-arginine: step 1/1. Its function is as follows. Involved in the catabolism of arginine. The chain is Arginase from Bacillus subtilis (strain 168).